We begin with the raw amino-acid sequence, 736 residues long: RNA-binding protein RMD9-like, mitochondrial (736 aa).

3 disordered regions span residues 1-28 (MFRFAQPANVLKGKAPSQIVPPHPKTNS), 124-148 (PRRSNMRNNGNNNMNNGRRTEHPNT), and 566-618 (NRGI…GTPV). Residues 1–79 (MFRFAQPANV…HFKNQFSSRN (79 aa)) constitute a mitochondrion transit peptide. A compositionally biased stretch (low complexity) spans 125–140 (RRSNMRNNGNNNMNNG). Over residues 566-578 (NRGISSSSPMSAV) the composition is skewed to polar residues. Positions 579–596 (NSLAPSTTNTPSPSLSPI) are enriched in low complexity. Residues 602 to 613 (LSSARNTPNKIW) show a composition bias toward polar residues.

The protein belongs to the RMD9 family. In terms of assembly, monomer. Post-translationally, phosphorylated. Phosphorylation promotes binding to RNA.

It is found in the mitochondrion inner membrane. Its function is as follows. May be involved in the processing or stability of mitochondrial mRNAs. The polypeptide is RNA-binding protein RMD9-like, mitochondrial (Candida glabrata (strain ATCC 2001 / BCRC 20586 / JCM 3761 / NBRC 0622 / NRRL Y-65 / CBS 138) (Yeast)).